We begin with the raw amino-acid sequence, 204 residues long: Large ribosomal subunit protein uL4 (204 aa).

The interval 44-76 (RAGTHRTKGMGEISGTTKKPYRQKGTGSARQGS) is disordered.

Belongs to the universal ribosomal protein uL4 family. As to quaternary structure, part of the 50S ribosomal subunit.

Its function is as follows. One of the primary rRNA binding proteins, this protein initially binds near the 5'-end of the 23S rRNA. It is important during the early stages of 50S assembly. It makes multiple contacts with different domains of the 23S rRNA in the assembled 50S subunit and ribosome. In terms of biological role, forms part of the polypeptide exit tunnel. The polypeptide is Large ribosomal subunit protein uL4 (Gluconobacter oxydans (strain 621H) (Gluconobacter suboxydans)).